Consider the following 528-residue polypeptide: Cytochrome P450 monooxygenase polB (528 aa).

A helical membrane pass occupies residues 3-23 (SFFLVCPVAFLGFTICYLVYV). C473 contributes to the heme binding site.

It belongs to the cytochrome P450 family. The cofactor is heme.

The protein localises to the membrane. It catalyses the reaction 4beta-carboxyl motiol + reduced [NADPH--hemoprotein reductase] + O2 = 2alpha-hydroxyl, 4beta-carboxyl motiol + oxidized [NADPH--hemoprotein reductase] + H2O + H(+). It carries out the reaction 2-deoxypolytolypin + reduced [NADPH--hemoprotein reductase] + O2 = polytolypin + oxidized [NADPH--hemoprotein reductase] + H2O + H(+). Its pathway is secondary metabolite biosynthesis; terpenoid biosynthesis. Cytochrome P450 monooxygenase; part of the gene cluster that mediates the biosynthesis of antifungal fernane-type triterpenoid polytolypin. PolB acts as a hydroxylase and installs the 2-alpha-hydroxyl group in polytolypin. Within the pathway, the triterpene cyclase polA first catalyzes the cyclization of 2,3-oxidosqualene to motiol, polC converts the 4-alpha-methyl group of motiol to a carboxyl group, polB is responsible for appending a hydroxyl group at the 2-alpha position and polE is a dual functional P450, which can catalyze the formation of both the 1-beta-hydroxyl group and 10-beta-carboxyl group. This is Cytochrome P450 monooxygenase polB from Polytolypa hystricis (strain UAMH7299).